Reading from the N-terminus, the 122-residue chain is Prefoldin subunit 1 (122 aa).

Ala2 bears the N-acetylalanine mark.

This sequence belongs to the prefoldin subunit beta family. Heterohexamer of two PFD-alpha type and four PFD-beta type subunits.

Functionally, binds specifically to cytosolic chaperonin (c-CPN) and transfers target proteins to it. Binds to nascent polypeptide chain and promotes folding in an environment in which there are many competing pathways for nonnative proteins. The polypeptide is Prefoldin subunit 1 (PFDN1) (Pongo abelii (Sumatran orangutan)).